Here is a 699-residue protein sequence, read N- to C-terminus: Macoilin-2 (699 aa).

A run of 4 helical transmembrane segments spans residues 28-48, 75-95, 120-140, and 154-174; these read TFLYLKFLVVWALVLLADFVL, AFSVFFVCVAFTSDIICLLFI, VCLPTVSLWILFVYIEAAIRF, and FAAHCIGYPVVTLGFGFKSYV. Disordered stretches follow at residues 219–289, 322–411, 432–451, and 679–699; these read AAAA…SILP, LLKD…PNNQ, LQASRQTEQDLRSQLGSLGT, and FMDTSPSGLDPNASVYQPLKK. Residues N241, N267, N345, and N365 are each glycosylated (N-linked (GlcNAc...) asparagine). Residues 257 to 271 are compositionally biased toward basic and acidic residues; sequence LEYREKERGKNESKK. Over residues 329–346 the composition is skewed to low complexity; that stretch reads SSSSSSTSSNSNKNYKNA. Positions 366–382 are enriched in low complexity; that stretch reads GSVPSSSGPSSSASSSS. Residue N690 is glycosylated (N-linked (GlcNAc...) asparagine).

Belongs to the macoilin family.

It localises to the nucleus membrane. The protein localises to the cell projection. The protein resides in the axon. It is found in the rough endoplasmic reticulum membrane. In terms of biological role, may play a role in the regulation of neuronal activity. The chain is Macoilin-2 from Danio rerio (Zebrafish).